Reading from the N-terminus, the 188-residue chain is ATP synthase subunit delta (188 aa).

Belongs to the ATPase delta chain family. In terms of assembly, F-type ATPases have 2 components, F(1) - the catalytic core - and F(0) - the membrane proton channel. F(1) has five subunits: alpha(3), beta(3), gamma(1), delta(1), epsilon(1). F(0) has three main subunits: a(1), b(2) and c(10-14). The alpha and beta chains form an alternating ring which encloses part of the gamma chain. F(1) is attached to F(0) by a central stalk formed by the gamma and epsilon chains, while a peripheral stalk is formed by the delta and b chains.

It localises to the cell membrane. Functionally, f(1)F(0) ATP synthase produces ATP from ADP in the presence of a proton or sodium gradient. F-type ATPases consist of two structural domains, F(1) containing the extramembraneous catalytic core and F(0) containing the membrane proton channel, linked together by a central stalk and a peripheral stalk. During catalysis, ATP synthesis in the catalytic domain of F(1) is coupled via a rotary mechanism of the central stalk subunits to proton translocation. This protein is part of the stalk that links CF(0) to CF(1). It either transmits conformational changes from CF(0) to CF(1) or is implicated in proton conduction. This is ATP synthase subunit delta from Lawsonia intracellularis (strain PHE/MN1-00).